A 971-amino-acid polypeptide reads, in one-letter code: Exportin-2 (971 aa).

Residues 29–102 (AEKFLESVEG…KANIVNLMLS (74 aa)) form the Importin N-terminal domain.

Belongs to the XPO2/CSE1 family. In terms of assembly, interacts with cftr.

It is found in the cytoplasm. Its subcellular location is the nucleus. Its function is as follows. Export receptor for importin alpha. Mediates importin-alpha re-export from the nucleus to the cytoplasm after import substrates have been released into the nucleoplasm. Negatively regulates fluid secretion and plays a role in fluid homeostasis by down-regulating cftr activity. This chain is Exportin-2 (cse1l), found in Oreochromis niloticus (Nile tilapia).